The following is a 98-amino-acid chain: MTKSELIERIVTHQGLLSSKDVELAIKTMLEQMSQCLATGDRIEIRGFGSFSLHYRAPRVGRNPKTGQSVELEGKFVPHFKPGKELRDRVNEEEHEHP.

The protein belongs to the bacterial histone-like protein family. In terms of assembly, heterodimer of an alpha and a beta chain.

This protein is one of the two subunits of integration host factor, a specific DNA-binding protein that functions in genetic recombination as well as in transcriptional and translational control. The sequence is that of Integration host factor subunit beta from Pseudomonas putida (strain W619).